Reading from the N-terminus, the 86-residue chain is Teretoxin Tsu6.16 (86 aa).

The signal sequence occupies residues 1–21 (MATSGRLLCVCLVMGLVFESL). A propeptide spanning residues 22–46 (GYLTGREKRPAENLEASVQRRWYLN) is cleaved from the precursor.

The protein belongs to the teretoxin M (TM) superfamily. In terms of processing, contains 3 disulfide bonds. As to expression, expressed by the venom duct.

It localises to the secreted. The chain is Teretoxin Tsu6.16 from Terebra subulata (Chocolate spotted auger).